The chain runs to 77 residues: Putative defensin-like protein 30 (77 aa).

The signal sequence occupies residues 1–26; it reads MASSSKCAFLVFLCMIVLLAPSEVHA. 3 cysteine pairs are disulfide-bonded: cysteine 43–cysteine 63, cysteine 49–cysteine 72, and cysteine 53–cysteine 74.

Belongs to the DEFL family.

It is found in the secreted. The sequence is that of Putative defensin-like protein 30 from Arabidopsis thaliana (Mouse-ear cress).